The sequence spans 708 residues: MHARQRNVGNGYRSGSIGMGMSGSRISPERPMRGHGFYGSEHQHRGFNRGYGRGRGRSKSYHNQLPPPLPPPPVQRRSSGGDVFMEAGRLATEYLVSQGVLPQTVLSSKWQNGNFRKQAGEFQSSRSQEEARMDVSAPAAEKRRYIDGYSSAGSRNSLKGRRSHRYDSDFGRSGSWSERSKAFETETGDDSVSGHQEEQPLAEDIASSVQRSASGEFMRKCEGAGDSESVLDKYNLQDEAQSKTGSSSAGKDIVQDCEISKVSEGSSSLSAGSGEMKGRSGGNGGEDENQTAIEDGSIHQRCEDASIDQQCGADESFTKSGIDLATLCKFEKVPTRTRSSLTAKGPKLYLSHNIKDTSHNSGLEEEDQTENRCETRGQSSGKADSTGDENDQVEDFALVQYIENSKCHRSNSFPSSILRDNSEKESGLELPNLHRSHSVGKVGEKRPGEGSDLEEGSKRQRDWVAVSEANERFNMFKTSGNQCDPEEEGKTSSFNKRLIDGAAGKRVSHESLVNNSTYNRTHTGRTGPGYAEEHQLFPASFKMCDLNLGGASDVNDGIKESRQAVDFDLSISSSSKSLEFGTSTRMSNGKEIEVINLDDDQEVVKSSNDPGRKQEAAPYMGIDDVPDYNERLMMVEYLDSFTPINQGTSSVPQNNNTVSLQDREGAIGNDQVPNNTDDDSIFMSLGEIPLTFLQAWDQPPARGYEKPF.

Disordered regions lie at residues 1-79 (MHAR…RRSS), 119-301 (AGEF…IHQR), 349-390 (YLSH…GDEN), and 410-461 (SNSF…KRQR). The span at 65 to 74 (LPPPLPPPPV) shows a compositional bias: pro residues. Polar residues predominate over residues 238–249 (DEAQSKTGSSSA). The segment covering 260–274 (SKVSEGSSSLSAGSG) has biased composition (low complexity). The segment covering 410-419 (SNSFPSSILR) has biased composition (polar residues). The segment covering 442-461 (VGEKRPGEGSDLEEGSKRQR) has biased composition (basic and acidic residues).

This is an uncharacterized protein from Arabidopsis thaliana (Mouse-ear cress).